A 505-amino-acid polypeptide reads, in one-letter code: ATP synthase subunit alpha (505 aa).

Position 170-177 (170-177) interacts with ATP; that stretch reads GDRQTGKT.

This sequence belongs to the ATPase alpha/beta chains family. F-type ATPases have 2 components, CF(1) - the catalytic core - and CF(0) - the membrane proton channel. CF(1) has five subunits: alpha(3), beta(3), gamma(1), delta(1), epsilon(1). CF(0) has four main subunits: a(1), b(1), b'(1) and c(9-12).

The protein localises to the cellular thylakoid membrane. It carries out the reaction ATP + H2O + 4 H(+)(in) = ADP + phosphate + 5 H(+)(out). Its function is as follows. Produces ATP from ADP in the presence of a proton gradient across the membrane. The alpha chain is a regulatory subunit. The sequence is that of ATP synthase subunit alpha from Prochlorococcus marinus subsp. pastoris (strain CCMP1986 / NIES-2087 / MED4).